The sequence spans 334 residues: PDZ domain-containing protein MAGIX (334 aa).

2 stretches are compositionally biased toward basic and acidic residues: residues 1–13 (MEPR…DPRG) and 209–224 (LETH…EPRK). 2 disordered regions span residues 1 to 26 (MEPR…LAGP) and 209 to 306 (LETH…WLVP). Residues 125 to 209 (SVELVRGYAG…QLHLVIRRPL (85 aa)) form the PDZ domain. Polar residues predominate over residues 244-260 (GSRSSSTSLVQHPPSRT). The residue at position 272 (Ser272) is a Phosphoserine.

The polypeptide is PDZ domain-containing protein MAGIX (MAGIX) (Homo sapiens (Human)).